The sequence spans 644 residues: Threonine--tRNA ligase (644 aa).

The TGS domain maps to 1–62 (MSFSVTLPDG…DSDVEIAIIT (62 aa)). The interval 240-538 (DHRTIGRDLD…LTEIYKGAFP (299 aa)) is catalytic. Zn(2+)-binding residues include cysteine 334, histidine 385, and histidine 515.

The protein belongs to the class-II aminoacyl-tRNA synthetase family. Homodimer. Requires Zn(2+) as cofactor.

Its subcellular location is the cytoplasm. It carries out the reaction tRNA(Thr) + L-threonine + ATP = L-threonyl-tRNA(Thr) + AMP + diphosphate + H(+). Catalyzes the attachment of threonine to tRNA(Thr) in a two-step reaction: L-threonine is first activated by ATP to form Thr-AMP and then transferred to the acceptor end of tRNA(Thr). Also edits incorrectly charged L-seryl-tRNA(Thr). The polypeptide is Threonine--tRNA ligase (Lactobacillus acidophilus (strain ATCC 700396 / NCK56 / N2 / NCFM)).